The following is a 263-amino-acid chain: MNSLNNLRTNNPLVICYTNDVVKNFTANGLLSLGASPAMSQAPEEAIDMLTPANALLINIGTLTKDREQDILEIAKTANEVGTPIVFDPVAVGASQYRKDFCKTFLNTVDVVVIKGNASEILALINNDAKMKGTDSDDNLNAIEIAKEAHKRLNSAIIITGKEDVVIQDNQIYQLNNGSALLAKVTGAGCLLGAVIASFLPTDETTSISQLVEATSIYNIAAEKAEQLAEDKGPGTFMTLLLDALYQVTYDDYSNQSDIQEVQ.

Methionine 39 provides a ligand contact to substrate. ATP contacts are provided by lysine 115 and threonine 160. Glycine 187 contacts substrate.

Belongs to the Thz kinase family. Mg(2+) is required as a cofactor.

It carries out the reaction 5-(2-hydroxyethyl)-4-methylthiazole + ATP = 4-methyl-5-(2-phosphooxyethyl)-thiazole + ADP + H(+). It participates in cofactor biosynthesis; thiamine diphosphate biosynthesis; 4-methyl-5-(2-phosphoethyl)-thiazole from 5-(2-hydroxyethyl)-4-methylthiazole: step 1/1. Functionally, catalyzes the phosphorylation of the hydroxyl group of 4-methyl-5-beta-hydroxyethylthiazole (THZ). This is Hydroxyethylthiazole kinase from Staphylococcus saprophyticus subsp. saprophyticus (strain ATCC 15305 / DSM 20229 / NCIMB 8711 / NCTC 7292 / S-41).